A 239-amino-acid polypeptide reads, in one-letter code: Phosphoribosylaminoimidazole-succinocarboxamide synthase (239 aa).

The protein belongs to the SAICAR synthetase family.

It carries out the reaction 5-amino-1-(5-phospho-D-ribosyl)imidazole-4-carboxylate + L-aspartate + ATP = (2S)-2-[5-amino-1-(5-phospho-beta-D-ribosyl)imidazole-4-carboxamido]succinate + ADP + phosphate + 2 H(+). Its pathway is purine metabolism; IMP biosynthesis via de novo pathway; 5-amino-1-(5-phospho-D-ribosyl)imidazole-4-carboxamide from 5-amino-1-(5-phospho-D-ribosyl)imidazole-4-carboxylate: step 1/2. The protein is Phosphoribosylaminoimidazole-succinocarboxamide synthase of Bacillus cereus (strain AH187).